The sequence spans 617 residues: MNNVISFIGNSSNKYFQINQLHFIRIINKNIHSKNNLINSNSSYNVFYNKYFIKNTFQNKNKLSSIYSKLNFSIKNMCKDKNEKKNYEHVNANEKNGYLASEKNELTKNKVEEHTYDYDYVVIGGGPGGMASAKEAAAHGARVLLFDYVKPSSQGTKWGIGGTCVNVGCVPKKLMHYAGHMGSIFKLDSKAYGWKFDNLKHDWKKLVTTVQSHIRSLNFSYMTGLRSSKVKYINGLAKLKDKNTVSYYLKGDLSKEETVTGKYILIATGCRPHIPDDVEGAKELSITSDDIFSLKKDPGKTLVVGASYVALECSGFLNSLGYDVTVAVRSIVLRGFDQQCAVKVKLYMEEQGVMFKNGILPKKLTKMDDKILVEFSDKTSELYDTVLYAIGRKGDIDGLNLESLNMNVNKSNNKIIADHLSCTNIPSIFAVGDVAENVPELAPVAIKAGEILARRLFKDSDEIMDYSYIPTSIYTPIEYGACGYSEEKAYELYGKSNVEVFLQEFNNLEISAVHRQKHIRAQKDEYDLDVSSTCLAKLVCLKNEDNRVIGFHYVGPNAGEVTQGMALALRLKVKKKDFDNCIGIHPTDAESFMNLFVTISSGLSYAAKGGCGGGKCG.

Residues 127-128 (PG), 147-150 (DYVK), 163-164 (TC), 168-172 (GCVPK), Ala-237, Asp-433, and 440-442 (ELA) each bind FAD. Cysteines 164 and 169 form a disulfide. The segment at 514–528 (HRQKHIRAQKDEYDL) is loop important for the interaction with TRX1. An FAD-binding site is contributed by His-585. His-585 functions as the Proton acceptor in the catalytic mechanism. Cys-611 and Cys-616 form a disulfide bridge.

It belongs to the class-I pyridine nucleotide-disulfide oxidoreductase family. As to quaternary structure, homodimer. FAD is required as a cofactor.

Its subcellular location is the mitochondrion. It is found in the cytoplasm. It catalyses the reaction [thioredoxin]-dithiol + NADP(+) = [thioredoxin]-disulfide + NADPH + H(+). Its function is as follows. Catalyzes the transfer of electrons from NADPH to thioredoxins TRX1, TRX2 and TRX3, which in turn act as reductants of disulfide containing proteins. Able to reduce nitroglutathione (GSNO), a compound involved in the transport of nitric oxide (NO); however, TRX1 is more efficient in reducing GSNO. Has no catalytic activity towards oxidized glutathione (GSSG). The chain is Thioredoxin reductase from Plasmodium falciparum (isolate 3D7).